A 319-amino-acid polypeptide reads, in one-letter code: Cytochrome f (319 aa).

A signal peptide spans 1–35 (METRNIFSWIKEQITRSISVSLMIYIITRTAVSNA). Residues tyrosine 36, cysteine 56, cysteine 59, and histidine 60 each contribute to the heme site. The helical transmembrane segment at 285–305 (VQGLLFFLASVILAQIFLVLK) threads the bilayer.

It belongs to the cytochrome f family. The 4 large subunits of the cytochrome b6-f complex are cytochrome b6, subunit IV (17 kDa polypeptide, petD), cytochrome f and the Rieske protein, while the 4 small subunits are PetG, PetL, PetM and PetN. The complex functions as a dimer. Heme is required as a cofactor.

The protein resides in the plastid. Its subcellular location is the chloroplast thylakoid membrane. Component of the cytochrome b6-f complex, which mediates electron transfer between photosystem II (PSII) and photosystem I (PSI), cyclic electron flow around PSI, and state transitions. This chain is Cytochrome f, found in Coffea arabica (Arabian coffee).